A 191-amino-acid polypeptide reads, in one-letter code: MKKEILEWIISIAVAFVILFIVGKFIVTPYTIKGESMDPTLKDGERVAVNIVGYKTGGLEKGNVVVFHANKNDDYVKRVIGVPGDKVEYKNDTLYVNGKKQDEPYLNYNLKHKQGDYITGTFQVKDLPNANPKSNVIPKGKYLVLGDNREVSKDSRAFGLIDEDQIVGKVSFRFWPFSEFKHNFNPENTKN.

Topologically, residues 1–7 are cytoplasmic; the sequence is MKKEILE. The helical transmembrane segment at 8–28 threads the bilayer; that stretch reads WIISIAVAFVILFIVGKFIVT. At 29 to 191 the chain is on the extracellular side; sequence PYTIKGESMD…HNFNPENTKN (163 aa). Catalysis depends on residues Ser-36 and Lys-77.

The protein belongs to the peptidase S26 family.

It localises to the cell membrane. The enzyme catalyses Cleavage of hydrophobic, N-terminal signal or leader sequences from secreted and periplasmic proteins.. Functionally, essential for cell viability. The protein is Signal peptidase IB (spsB) of Staphylococcus aureus (strain COL).